The chain runs to 87 residues: Cytochrome c6 (87 aa).

4 residues coordinate heme c: Cys-14, Cys-17, His-18, and Met-58.

Belongs to the cytochrome c family. PetJ subfamily. Monomer. Post-translationally, binds 1 heme c group covalently per subunit.

Its subcellular location is the cellular thylakoid lumen. Functions as an electron carrier between membrane-bound cytochrome b6-f and photosystem I in oxygenic photosynthesis. The sequence is that of Cytochrome c6 (petJ) from Synechococcus elongatus.